The chain runs to 73 residues: Translation initiation factor IF-1 (73 aa).

In terms of domain architecture, S1-like spans 1-72 (MAKEDAIEVE…NRGRITYRSK (72 aa)).

The protein belongs to the IF-1 family. As to quaternary structure, component of the 30S ribosomal translation pre-initiation complex which assembles on the 30S ribosome in the order IF-2 and IF-3, IF-1 and N-formylmethionyl-tRNA(fMet); mRNA recruitment can occur at any time during PIC assembly.

The protein resides in the cytoplasm. Its function is as follows. One of the essential components for the initiation of protein synthesis. Stabilizes the binding of IF-2 and IF-3 on the 30S subunit to which N-formylmethionyl-tRNA(fMet) subsequently binds. Helps modulate mRNA selection, yielding the 30S pre-initiation complex (PIC). Upon addition of the 50S ribosomal subunit IF-1, IF-2 and IF-3 are released leaving the mature 70S translation initiation complex. This Syntrophobacter fumaroxidans (strain DSM 10017 / MPOB) protein is Translation initiation factor IF-1.